The following is an 83-amino-acid chain: Putative snRNP Sm-like protein (83 aa).

Residues 9–81 (KPMDVLKSAL…VIFVSPSKGD (73 aa)) form the Sm domain.

It belongs to the snRNP Sm proteins family.

The sequence is that of Putative snRNP Sm-like protein from Thermoplasma acidophilum (strain ATCC 25905 / DSM 1728 / JCM 9062 / NBRC 15155 / AMRC-C165).